We begin with the raw amino-acid sequence, 41 residues long: MKVRNSLKSLRSRHRDNRLVRRKGRVYVINKVQRRFKARQG.

It belongs to the bacterial ribosomal protein bL36 family.

The polypeptide is Large ribosomal subunit protein bL36 (Rhodopseudomonas palustris (strain BisB18)).